A 130-amino-acid polypeptide reads, in one-letter code: Small ribosomal subunit protein uS8 (130 aa).

This sequence belongs to the universal ribosomal protein uS8 family. In terms of assembly, part of the 30S ribosomal subunit.

In terms of biological role, one of the primary rRNA binding proteins, it binds directly to 16S rRNA central domain where it helps coordinate assembly of the platform of the 30S subunit. The chain is Small ribosomal subunit protein uS8 from Halorubrum lacusprofundi (strain ATCC 49239 / DSM 5036 / JCM 8891 / ACAM 34).